The sequence spans 415 residues: Tyrosine--tRNA ligase (415 aa).

Tyrosine 34 is a binding site for L-tyrosine. A 'HIGH' region motif is present at residues 39–48 (PSADSLHLGN). 2 residues coordinate L-tyrosine: tyrosine 162 and glutamine 166. Positions 224-228 (KFGKS) match the 'KMSKS' region motif. Position 227 (lysine 227) interacts with ATP. Residues 346–413 (IKIIDLLNLA…KRNYFLIVWN (68 aa)) form the S4 RNA-binding domain.

It belongs to the class-I aminoacyl-tRNA synthetase family. TyrS type 1 subfamily. As to quaternary structure, homodimer.

The protein resides in the cytoplasm. The enzyme catalyses tRNA(Tyr) + L-tyrosine + ATP = L-tyrosyl-tRNA(Tyr) + AMP + diphosphate + H(+). Its function is as follows. Catalyzes the attachment of tyrosine to tRNA(Tyr) in a two-step reaction: tyrosine is first activated by ATP to form Tyr-AMP and then transferred to the acceptor end of tRNA(Tyr). This is Tyrosine--tRNA ligase from Ureaplasma urealyticum serovar 10 (strain ATCC 33699 / Western).